A 182-amino-acid chain; its full sequence is Acireductone dioxygenase (182 aa).

Histidine 100, histidine 102, glutamate 106, and histidine 145 together coordinate Fe(2+). Positions 100, 102, 106, and 145 each coordinate Ni(2+).

It belongs to the acireductone dioxygenase (ARD) family. In terms of assembly, monomer. Fe(2+) serves as cofactor. It depends on Ni(2+) as a cofactor.

The enzyme catalyses 1,2-dihydroxy-5-(methylsulfanyl)pent-1-en-3-one + O2 = 3-(methylsulfanyl)propanoate + CO + formate + 2 H(+). It carries out the reaction 1,2-dihydroxy-5-(methylsulfanyl)pent-1-en-3-one + O2 = 4-methylsulfanyl-2-oxobutanoate + formate + 2 H(+). Its pathway is amino-acid biosynthesis; L-methionine biosynthesis via salvage pathway; L-methionine from S-methyl-5-thio-alpha-D-ribose 1-phosphate: step 5/6. Its function is as follows. Catalyzes 2 different reactions between oxygen and the acireductone 1,2-dihydroxy-3-keto-5-methylthiopentene (DHK-MTPene) depending upon the metal bound in the active site. Fe-containing acireductone dioxygenase (Fe-ARD) produces formate and 2-keto-4-methylthiobutyrate (KMTB), the alpha-ketoacid precursor of methionine in the methionine recycle pathway. Ni-containing acireductone dioxygenase (Ni-ARD) produces methylthiopropionate, carbon monoxide and formate, and does not lie on the methionine recycle pathway. This is Acireductone dioxygenase from Nostoc sp. (strain PCC 7120 / SAG 25.82 / UTEX 2576).